Reading from the N-terminus, the 864-residue chain is Translation initiation factor IF-2 (864 aa).

A compositionally biased stretch (basic and acidic residues) spans 140–171 (DSRSLNTKKENKLKISNKDEQNKKFNQHRESN). Residues 140-179 (DSRSLNTKKENKLKISNKDEQNKKFNQHRESNSFDLNHKK) form a disordered region. One can recognise a tr-type G domain in the interval 364 to 533 (IRAPVVTIMG…LLQAEMLELK (170 aa)). Residues 373–380 (GHVDHGKT) are G1. 373-380 (GHVDHGKT) is a GTP binding site. Residues 398–402 (GITQN) form a G2 region. The tract at residues 419 to 422 (DTPG) is G3. GTP contacts are provided by residues 419–423 (DTPGH) and 473–476 (NKID). The tract at residues 473–476 (NKID) is G4. Residues 509-511 (SAK) form a G5 region.

This sequence belongs to the TRAFAC class translation factor GTPase superfamily. Classic translation factor GTPase family. IF-2 subfamily.

The protein resides in the cytoplasm. One of the essential components for the initiation of protein synthesis. Protects formylmethionyl-tRNA from spontaneous hydrolysis and promotes its binding to the 30S ribosomal subunits. Also involved in the hydrolysis of GTP during the formation of the 70S ribosomal complex. The polypeptide is Translation initiation factor IF-2 (Buchnera aphidicola subsp. Acyrthosiphon pisum (strain Tuc7)).